The chain runs to 403 residues: MDVDRLQEALKDFEKRGKKEVSPELDQFLCHVAKTGETVVQWPQFKEYFVFKLEMVMDDFRTSAPEQRGSPNPNVEYIPFDEMKQRILKIVTGFNGTPFTIQRLCELLTDPRKNYNGTDKFLRGVEKNIMVVSCVYPSSEKNNSTSLNRMNGVMFPSNSQSYTDRSNVNGPGTPRPMIRPKFSLSSPMNTNGLPDSTENKESDLQQKEKSQSDSAVSDDGSQATTSRNKHSAEDSAEVEEHEVKRLKFDPDEEEEAACANPDASSEVSAEMAEEAESASTSADKGKESCQTAQASDEESLMTASESTEAESNERDSENVSVTEESSEESHHMDQSEESESACSLTSDEHNSTAAATTSTEDADPSEEEHLATSSGKSTETLTLSPMENSEEATDAPEEPMEQD.

3 stretches are compositionally biased toward polar residues: residues 140 to 149, 156 to 170, and 183 to 196; these read EKNNSTSLNR, PSNSQSYTDRSNVNG, and SLSSPMNTNGLPDS. The segment at 140 to 403 is disordered; that stretch reads EKNNSTSLNR…DAPEEPMEQD (264 aa). Basic and acidic residues predominate over residues 197–211; that stretch reads TENKESDLQQKEKSQ. Composition is skewed to polar residues over residues 212 to 226 and 371 to 387; these read SDSAVSDDGSQATTS and ATSSGKSTETLTLSPME. Over residues 388 to 403 the composition is skewed to acidic residues; that stretch reads NSEEATDAPEEPMEQD.

Belongs to the PPP4R2 family. In terms of assembly, serine/threonine-protein phosphatase 4 (PP4) occurs in different assemblies of the catalytic and one or more regulatory subunits.

Its function is as follows. Regulatory subunit of serine/threonine-protein phosphatase 4 (PP4). The protein is Serine/threonine-protein phosphatase 4 regulatory subunit 2-A (ppp4r2-a) of Xenopus laevis (African clawed frog).